The sequence spans 551 residues: uncharacterized protein (551 aa).

Residues 1–7 lie on the Cytoplasmic side of the membrane; the sequence is MKKNSSV. The chain crosses the membrane as a helical span at residues 8 to 28; it reads VFFLVGLSQFVTMAFLIIGSI. The Vacuolar segment spans residues 29–88; that stretch reads TAPIFKQIGYSKYDEITYGTFGYCKEGSCSKASYNYHPDELSDSDSNWKLNSNARSILGK. Residues 89 to 109 traverse the membrane as a helical segment; that stretch reads IIFITPIAAGLNFLGFLCTIM. The Cytoplasmic portion of the chain corresponds to 110–135; the sequence is SVLLINVLSSDRVGSASAIMFFVNLT. A helical transmembrane segment spans residues 136–156; it reads FSTLGFLSASLICIVVFLLFY. The Vacuolar portion of the chain corresponds to 157 to 160; the sequence is PHVT. Residues 161-181 traverse the membrane as a helical segment; it reads WCSWVLIPGAALSLLVIPLIF. Residues 182–551 lie on the Cytoplasmic side of the membrane; sequence SAYSRSSGSR…TSLNNPYGFR (370 aa). Residues S224 and S232 each carry the phosphoserine modification. Residues 280 to 341 form a disordered region; sequence AKDMENSNGS…NGSNTSNNIN (62 aa). The segment covering 307–320 has biased composition (polar residues); that stretch reads TSTYSVIESESGLK. The segment covering 321–341 has biased composition (low complexity); the sequence is NGSVSNNYVRNNGSNTSNNIN. At S363 the chain carries Phosphoserine.

In terms of assembly, forms homo dimers or homooligomers in MCC microdomains. Interacts with BOI2 and RHO3, two key regulators of secretion.

Its subcellular location is the vacuole membrane. The protein localises to the cell membrane. Protein involved in secretion and cell wall organization. Contributes to cell surface-related functions as a auxiliary component of MCC/eisosome that specifically interacts with the secretory pathway. This is an uncharacterized protein from Saccharomyces cerevisiae (strain ATCC 204508 / S288c) (Baker's yeast).